Here is a 349-residue protein sequence, read N- to C-terminus: Ribosomal RNA small subunit methyltransferase H (349 aa).

Residues 34–36 (GGH), Asp54, Phe81, Asp102, and Gln109 contribute to the S-adenosyl-L-methionine site.

Belongs to the methyltransferase superfamily. RsmH family.

The protein resides in the cytoplasm. The catalysed reaction is cytidine(1402) in 16S rRNA + S-adenosyl-L-methionine = N(4)-methylcytidine(1402) in 16S rRNA + S-adenosyl-L-homocysteine + H(+). In terms of biological role, specifically methylates the N4 position of cytidine in position 1402 (C1402) of 16S rRNA. The polypeptide is Ribosomal RNA small subunit methyltransferase H (Dehalococcoides mccartyi (strain ATCC BAA-2266 / KCTC 15142 / 195) (Dehalococcoides ethenogenes (strain 195))).